Reading from the N-terminus, the 298-residue chain is 3-deoxy-manno-octulosonate cytidylyltransferase (298 aa).

A helical membrane pass occupies residues 22–42; sequence VWVLHGLALGAAAAAAAVAYL.

It belongs to the KdsB family. Mg(2+) is required as a cofactor. As to expression, ubiquitous.

The protein localises to the membrane. It catalyses the reaction 3-deoxy-alpha-D-manno-oct-2-ulosonate + CTP = CMP-3-deoxy-beta-D-manno-octulosonate + diphosphate. Its pathway is nucleotide-sugar biosynthesis; CMP-3-deoxy-D-manno-octulosonate biosynthesis; CMP-3-deoxy-D-manno-octulosonate from 3-deoxy-D-manno-octulosonate and CTP: step 1/1. Catalyzes the production of the sugar nucleotide CMP-3-deoxy-D-manno-octulosonate (CMP-KDO). CTP is the preferred nucleotide donor, and it can partially be replaced with UTP but not with ATP. Activates KDO during the biosynthesis of rhamnogalacturonan II (RG-II), a structurally complex pectic polysaccharide of the primary cell wall. RG-II is essential for the cell wall integrity of rapidly growing tissues and pollen tube growth and elongation. This Zea mays (Maize) protein is 3-deoxy-manno-octulosonate cytidylyltransferase.